A 180-amino-acid polypeptide reads, in one-letter code: Inorganic pyrophosphatase (180 aa).

The substrate site is built by K30, R44, and Y56. Mg(2+) is bound by residues D66, D71, and D103. Residue Y142 coordinates substrate.

It belongs to the PPase family. Homohexamer. The cofactor is Mg(2+).

The protein localises to the cytoplasm. The catalysed reaction is diphosphate + H2O = 2 phosphate + H(+). Its function is as follows. Catalyzes the hydrolysis of inorganic pyrophosphate (PPi) forming two phosphate ions. This is Inorganic pyrophosphatase from Buchnera aphidicola subsp. Schizaphis graminum (strain Sg).